Reading from the N-terminus, the 275-residue chain is Ribosomal protein L11 methyltransferase (275 aa).

4 residues coordinate S-adenosyl-L-methionine: Thr130, Gly151, Asp172, and Asn213.

It belongs to the methyltransferase superfamily. PrmA family.

Its subcellular location is the cytoplasm. The catalysed reaction is L-lysyl-[protein] + 3 S-adenosyl-L-methionine = N(6),N(6),N(6)-trimethyl-L-lysyl-[protein] + 3 S-adenosyl-L-homocysteine + 3 H(+). Methylates ribosomal protein L11. This chain is Ribosomal protein L11 methyltransferase, found in Wolinella succinogenes (strain ATCC 29543 / DSM 1740 / CCUG 13145 / JCM 31913 / LMG 7466 / NCTC 11488 / FDC 602W) (Vibrio succinogenes).